The primary structure comprises 255 residues: F-box/SPRY domain-containing protein 1 (255 aa).

The F-box domain occupies 3–51 (DPVAALCNFNVLEVIFSYLDLNDLSRCSQVCRSWHHFLNDENSDVWRWH). A B30.2/SPRY domain is found at 61-253 (MKSDLLTSVS…VSMVYLGTPL (193 aa)).

The protein belongs to the FBXO45/Fsn family. Component of an E3 ubiquitin ligase complex composed of hiw and Fsn.

Its subcellular location is the synapse. The protein operates within protein modification; protein ubiquitination. Required in the presynaptic motoneuron to down-regulate the levels of wnd and restrain synaptic terminal growth at the neuromuscular junction (NMJ). This chain is F-box/SPRY domain-containing protein 1, found in Drosophila willistoni (Fruit fly).